Reading from the N-terminus, the 270-residue chain is Putative phosphoenolpyruvate synthase regulatory protein (270 aa).

Glycine 150–threonine 157 is a binding site for ADP.

This sequence belongs to the pyruvate, phosphate/water dikinase regulatory protein family. PSRP subfamily.

It carries out the reaction [pyruvate, water dikinase] + ADP = [pyruvate, water dikinase]-phosphate + AMP + H(+). It catalyses the reaction [pyruvate, water dikinase]-phosphate + phosphate + H(+) = [pyruvate, water dikinase] + diphosphate. Bifunctional serine/threonine kinase and phosphorylase involved in the regulation of the phosphoenolpyruvate synthase (PEPS) by catalyzing its phosphorylation/dephosphorylation. This chain is Putative phosphoenolpyruvate synthase regulatory protein, found in Shewanella putrefaciens (strain CN-32 / ATCC BAA-453).